A 93-amino-acid chain; its full sequence is Putative membrane protein insertion efficiency factor (93 aa).

Belongs to the UPF0161 family.

It localises to the cell inner membrane. In terms of biological role, could be involved in insertion of integral membrane proteins into the membrane. The polypeptide is Putative membrane protein insertion efficiency factor (Cupriavidus taiwanensis (strain DSM 17343 / BCRC 17206 / CCUG 44338 / CIP 107171 / LMG 19424 / R1) (Ralstonia taiwanensis (strain LMG 19424))).